The primary structure comprises 282 residues: 2,3,4,5-tetrahydropyridine-2,6-dicarboxylate N-succinyltransferase (282 aa).

Residues R109 and D146 each coordinate substrate.

It belongs to the transferase hexapeptide repeat family. As to quaternary structure, homotrimer.

The protein resides in the cytoplasm. It catalyses the reaction (S)-2,3,4,5-tetrahydrodipicolinate + succinyl-CoA + H2O = (S)-2-succinylamino-6-oxoheptanedioate + CoA. Its pathway is amino-acid biosynthesis; L-lysine biosynthesis via DAP pathway; LL-2,6-diaminopimelate from (S)-tetrahydrodipicolinate (succinylase route): step 1/3. The polypeptide is 2,3,4,5-tetrahydropyridine-2,6-dicarboxylate N-succinyltransferase (Bartonella bacilliformis (strain ATCC 35685 / KC583 / Herrer 020/F12,63)).